Consider the following 143-residue polypeptide: Large ribosomal subunit protein uL16 (143 aa).

Residues 1 to 17 are compositionally biased toward basic residues; sequence MLQPKRTKFRKAHKGRI. Residues 1–21 are disordered; sequence MLQPKRTKFRKAHKGRIHGNA.

Belongs to the universal ribosomal protein uL16 family. As to quaternary structure, part of the 50S ribosomal subunit.

Its function is as follows. Binds 23S rRNA and is also seen to make contacts with the A and possibly P site tRNAs. The chain is Large ribosomal subunit protein uL16 from Rhizorhabdus wittichii (strain DSM 6014 / CCUG 31198 / JCM 15750 / NBRC 105917 / EY 4224 / RW1) (Sphingomonas wittichii).